The sequence spans 214 residues: Adenylate kinase (214 aa).

Position 10 to 15 (10 to 15 (GAGKGT)) interacts with ATP. Residues 30–59 (STGDMLRAAVKAGTPLGLEAKKVMDAGQLV) form an NMP region. Residues threonine 31, arginine 36, 57-59 (QLV), 85-88 (GFPR), and glutamine 92 each bind AMP. The segment at 122–159 (GRRVHPGSGRVYHIVFNQPKVEGKDDVTGEDLAIRPDD) is LID. Residues arginine 123 and 132-133 (VY) contribute to the ATP site. AMP-binding residues include arginine 156 and arginine 167. Glutamine 200 contributes to the ATP binding site.

The protein belongs to the adenylate kinase family. Monomer.

The protein resides in the cytoplasm. It carries out the reaction AMP + ATP = 2 ADP. It participates in purine metabolism; AMP biosynthesis via salvage pathway; AMP from ADP: step 1/1. Catalyzes the reversible transfer of the terminal phosphate group between ATP and AMP. Plays an important role in cellular energy homeostasis and in adenine nucleotide metabolism. This Shewanella woodyi (strain ATCC 51908 / MS32) protein is Adenylate kinase.